The chain runs to 314 residues: 2-methoxy-6-polyprenyl-1,4-benzoquinol methylase, mitochondrial (314 aa).

The N-terminal 19 residues, 1 to 19 (MLQSLNRSVRYLSTSIGSR), are a transit peptide targeting the mitochondrion. S-adenosyl-L-methionine contacts are provided by residues T109, D154, 186–187 (NS), and S203.

This sequence belongs to the class I-like SAM-binding methyltransferase superfamily. MenG/UbiE family. Component of a multi-subunit COQ enzyme complex.

Its subcellular location is the mitochondrion inner membrane. The enzyme catalyses a 2-methoxy-6-(all-trans-polyprenyl)benzene-1,4-diol + S-adenosyl-L-methionine = a 5-methoxy-2-methyl-3-(all-trans-polyprenyl)benzene-1,4-diol + S-adenosyl-L-homocysteine + H(+). It participates in cofactor biosynthesis; ubiquinone biosynthesis. In terms of biological role, methyltransferase required for the conversion of 2-polyprenyl-6-methoxy-1,4-benzoquinol (DDMQH2) to 2-polyprenyl-3-methyl-6-methoxy-1,4-benzoquinol (DMQH2). This Dictyostelium discoideum (Social amoeba) protein is 2-methoxy-6-polyprenyl-1,4-benzoquinol methylase, mitochondrial.